A 140-amino-acid chain; its full sequence is ATP synthase epsilon chain (140 aa).

Belongs to the ATPase epsilon chain family. As to quaternary structure, F-type ATPases have 2 components, CF(1) - the catalytic core - and CF(0) - the membrane proton channel. CF(1) has five subunits: alpha(3), beta(3), gamma(1), delta(1), epsilon(1). CF(0) has three main subunits: a, b and c.

It localises to the cell inner membrane. Functionally, produces ATP from ADP in the presence of a proton gradient across the membrane. The chain is ATP synthase epsilon chain from Vibrio vulnificus (strain CMCP6).